Reading from the N-terminus, the 62-residue chain is UPF0434 protein Smed_3047 (62 aa).

This sequence belongs to the UPF0434 family.

This is UPF0434 protein Smed_3047 from Sinorhizobium medicae (strain WSM419) (Ensifer medicae).